Here is a 149-residue protein sequence, read N- to C-terminus: MFQDPAERPYKLHDLCNEVEESIHEICLNCVYCKQELQRSEVYDFACYDLCIVYREGQPYGVCMKCLKFYSKISEYRWYRYSVYGETLEKQCNKQLCHLLIRCITCQKPLCPVEKQRHLEEKKRFHNIGGRWTGRCMSCWKPTRRETEV.

2 zinc fingers span residues cysteine 30–cysteine 66 and cysteine 103–cysteine 139. The short motif at threonine 147–valine 149 is the PDZ-binding domain element.

It belongs to the papillomaviridae E6 protein family. In terms of assembly, forms homodimers. Interacts with ubiquitin-protein ligase UBE3A/E6-AP and thus forms a complex with human TP53. Interacts with human NFX1 and MAGI3. Interacts with human IRF3; this interaction inhibits the establishment of antiviral state. Interacts with human TYK2; this interaction inhibits JAK-STAT activation by interferon alpha. Interacts with host DLG1; this interaction leads to the proteasomal degradation of DLG1.

The protein localises to the host cytoplasm. It is found in the host nucleus. Functionally, this protein may be involved in the oncogenic potential of this virus (associated with cancer of the uterine cervix). Its function is as follows. Plays a major role in the induction and maintenance of cellular transformation. Acts mainly as an oncoprotein by stimulating the destruction of many host cell key regulatory proteins. E6 associates with host UBE3A/E6-AP ubiquitin-protein ligase, and inactivates tumor suppressors TP53 and TP73 by targeting them to the 26S proteasome for degradation. In turn, DNA damage and chromosomal instabilities increase and lead to cell proliferation and cancer development. The complex E6/E6AP targets several other substrates to degradation via the proteasome including host DLG1 or NFX1, a repressor of human telomerase reverse transcriptase (hTERT). The resulting increased expression of hTERT prevents the shortening of telomere length leading to cell immortalization. Other cellular targets including BAK1, Fas-associated death domain-containing protein (FADD) and procaspase 8, are degraded by E6/E6AP causing inhibition of apoptosis. E6 also inhibits immune response by interacting with host IRF3 and TYK2. These interactions prevent IRF3 transcriptional activities and inhibit TYK2-mediated JAK-STAT activation by interferon alpha resulting in inhibition of the interferon signaling pathway. In Human papillomavirus 35, this protein is Protein E6.